The primary structure comprises 394 residues: MRNWCLCQICTCGSDYRPYEIVKQPRHIPEEYKPKQGKIDLGTTYKRDFNPYKVQPLIKVRPVERQQVKKGKLDTVPTYKDDYRSWDIQKCELCKPEQAYHPPDVKFGNSTTFQDDYVPQEIKPRQSFKPCSVVKCSVGPFNGDTSHRRDYVPHQLEVKFARPKEIYKPTDQPFEDLTTHRNDFQGLAGETAKICRPAYTRVTQNIQFKGSTEFRDSFQPWEIPPPKVKKVAEYVPPSGSMQLNSTSHLDYVPYQASRVVAIRPVSHRRQSNFPFQGKSTTKEDFPAWEICRQGLIKQQQQIPNPSGKFEGLSTFRSHFVPHELIPTESCKPLNEALKSSVPLDDVTMYSIQFTPKKQEICPASYPSPPGYIFENTNSQGHKFFRKIIPAVKAF.

6 mn regions span residues 110 to 122 (STTF…PQEI), 144 to 158 (DTSH…QLEV), 244 to 256 (NSTS…PYQA), 278 to 292 (KSTT…EICR), 312 to 324 (LSTF…PHEL), and 346 to 360 (VTMY…KQEI).

It belongs to the FAM154 family.

This Mus musculus (Mouse) protein is Stabilizer of axonemal microtubules 2 (Saxo2).